The primary structure comprises 376 residues: tRNA-specific 2-thiouridylase MnmA (376 aa).

Residues 16–23 (AMSGGVDS) and L42 contribute to the ATP site. C111 functions as the Nucleophile in the catalytic mechanism. Residues C111 and C210 are joined by a disulfide bond. G135 provides a ligand contact to ATP. Positions 158–160 (KDQ) are interaction with tRNA. The active-site Cysteine persulfide intermediate is C210.

The protein belongs to the MnmA/TRMU family.

The protein localises to the cytoplasm. The catalysed reaction is S-sulfanyl-L-cysteinyl-[protein] + uridine(34) in tRNA + AH2 + ATP = 2-thiouridine(34) in tRNA + L-cysteinyl-[protein] + A + AMP + diphosphate + H(+). Catalyzes the 2-thiolation of uridine at the wobble position (U34) of tRNA, leading to the formation of s(2)U34. This is tRNA-specific 2-thiouridylase MnmA from Streptomyces coelicolor (strain ATCC BAA-471 / A3(2) / M145).